Consider the following 139-residue polypeptide: uncharacterized protein (139 aa).

This is an uncharacterized protein from Homo sapiens (Human).